The following is a 584-amino-acid chain: Protein spire homolog 1 (584 aa).

The tract at residues 1–30 (MANTVEADGSNDEGYEAAEEGPEDEEDEKR) is disordered. Residues 1-73 (MANTVEADGS…RALFAETMEL (73 aa)) enclose the KIND domain. Positions 9-28 (GSNDEGYEAAEEGPEDEEDE) are enriched in acidic residues. Positions 71-99 (MELHTFLAKVKSAKENLKKIQEMEKSDES) form a coiled coil. 2 WH2 domains span residues 147-165 (PYEM…LRKV) and 211-228 (LHER…LRPV). The segment covering 224–238 (KLRPVSPEEIRRSRL) has biased composition (basic and acidic residues). The disordered stretch occupies residues 224-366 (KLRPVSPEEI…PTNVRQFLPP (143 aa)). Position 229 is a phosphoserine (serine 229). Residues 242-272 (TPESTKNLMESSMVNGGLTSQTKENGLSSAE) are compositionally biased toward polar residues. Phosphoserine occurs at positions 292, 293, and 295. Positions 302 to 320 (KSTSSSSVSPSFPEEPVLE) are enriched in low complexity. Position 337 is a phosphothreonine (threonine 337). The span at 340-356 (PERRQPPQRRHSIEKET) shows a compositional bias: basic and acidic residues. Residues 357–366 (PTNVRQFLPP) show a composition bias toward polar residues. Residues 384–404 (LALTVEEVMHIRQVLVKAELE) are spir-box. Residues serine 506, serine 510, and serine 563 each carry the phosphoserine modification.

Belongs to the spire family. As to quaternary structure, interacts with FMN2.

It localises to the cytoplasm. Its subcellular location is the cytoskeleton. The protein resides in the cytosol. The protein localises to the cleavage furrow. It is found in the perinuclear region. It localises to the cell membrane. Its subcellular location is the cytoplasmic vesicle membrane. In terms of biological role, acts as an actin nucleation factor, remains associated with the slow-growing pointed end of the new filament. Involved in intracellular vesicle transport along actin fibers, providing a novel link between actin cytoskeleton dynamics and intracellular transport. Required for asymmetric spindle positioning and asymmetric cell division during meiosis. Required for normal formation of the cleavage furrow and for polar body extrusion during female germ cell meiosis. Also acts in the nucleus: together with FMN2, promotes assembly of nuclear actin filaments in response to DNA damage in order to facilitate movement of chromatin and repair factors after DNA damage. In addition, promotes innate immune signaling downstream of dsRNA sensing. Mechanistically, contributes to IRF3 phosphorylation and activation downstream of MAVS and upstream of TBK1. In Macaca fascicularis (Crab-eating macaque), this protein is Protein spire homolog 1 (SPIRE1).